Consider the following 34-residue polypeptide: Potassium channel toxin alpha-KTx 18.2 (34 aa).

3 disulfide bridges follow: Cys7–Cys26, Cys12–Cys31, and Cys16–Cys33.

As to expression, expressed by the venom gland.

It localises to the secreted. Reversibly blocks Shaker B potassium channels. The protein is Potassium channel toxin alpha-KTx 18.2 of Tityus discrepans (Venezuelan scorpion).